The primary structure comprises 74 residues: Acyl carrier protein (74 aa).

A Carrier domain is found at 1 to 73 (MAVFEKVQEI…DLVAYVEEQA (73 aa)). Ser-35 carries the O-(pantetheine 4'-phosphoryl)serine modification.

This sequence belongs to the acyl carrier protein (ACP) family. 4'-phosphopantetheine is transferred from CoA to a specific serine of apo-ACP by AcpS. This modification is essential for activity because fatty acids are bound in thioester linkage to the sulfhydryl of the prosthetic group.

The protein resides in the cytoplasm. Its pathway is lipid metabolism; fatty acid biosynthesis. Carrier of the growing fatty acid chain in fatty acid biosynthesis. This Streptococcus pneumoniae serotype 4 (strain ATCC BAA-334 / TIGR4) protein is Acyl carrier protein.